Reading from the N-terminus, the 157-residue chain is Protein Smg (157 aa).

It belongs to the Smg family.

The sequence is that of Protein Smg from Enterobacter sp. (strain 638).